We begin with the raw amino-acid sequence, 617 residues long: Acyl-CoA dehydrogenase family member 11 (617 aa).

The interval 1–47 is disordered; the sequence is MHRIGNAVRMASSSSANATITARHTQYSHAKTGGFSQTGPTLHNPYK. Positions 11 to 22 are enriched in low complexity; the sequence is ASSSSANATITA. The segment covering 23–41 has biased composition (polar residues); the sequence is RHTQYSHAKTGGFSQTGPT. FAD is bound by residues 206–215 and 241–243; these read QWMTEKKGGS and FSS. A substrate-binding site is contributed by serine 215. Substrate contacts are provided by serine 267 and arginine 334. FAD contacts are provided by residues arginine 359, 366–369, glutamate 437, glycine 441, and 464–466; these read QSKW and EGT.

The protein belongs to the acyl-CoA dehydrogenase family. As to quaternary structure, homotetramer; dimer of dimers.

Promotes adaption to elevated temperatures by regulating expression of the lipid desaturase, fat-7. Binds selectively and with high affinity to fatty acids with chain lengths from C10 to C12 and prevents them from activating fat-7 expression mediated by the nuclear hormone receptor nhr-49, leading to low levels of membrane lipid desaturation and membrane fluidity for adaption to heat. This Caenorhabditis elegans protein is Acyl-CoA dehydrogenase family member 11.